Consider the following 145-residue polypeptide: Ribonuclease H (145 aa).

The region spanning 1–141 (MQEVELFTDG…VDELANQAMD (141 aa)) is the RNase H type-1 domain. Positions 9, 47, 69, and 133 each coordinate Mg(2+).

The protein belongs to the RNase H family. As to quaternary structure, monomer. It depends on Mg(2+) as a cofactor.

The protein resides in the cytoplasm. It catalyses the reaction Endonucleolytic cleavage to 5'-phosphomonoester.. In terms of biological role, endonuclease that specifically degrades the RNA of RNA-DNA hybrids. This is Ribonuclease H from Hydrogenovibrio crunogenus (strain DSM 25203 / XCL-2) (Thiomicrospira crunogena).